The following is a 933-amino-acid chain: Protein translocase subunit SecA (933 aa).

Residues Gln-87, 105–109 (GEGKT), and Asp-515 each bind ATP. Residues Cys-917, Cys-919, Cys-928, and His-929 each contribute to the Zn(2+) site.

The protein belongs to the SecA family. In terms of assembly, monomer and homodimer. Part of the essential Sec protein translocation apparatus which comprises SecA, SecYEG and auxiliary proteins SecDF-YajC and YidC. Requires Zn(2+) as cofactor.

It is found in the cell inner membrane. The protein resides in the cytoplasm. It catalyses the reaction ATP + H2O + cellular proteinSide 1 = ADP + phosphate + cellular proteinSide 2.. Its function is as follows. Part of the Sec protein translocase complex. Interacts with the SecYEG preprotein conducting channel. Has a central role in coupling the hydrolysis of ATP to the transfer of proteins into and across the cell membrane, serving both as a receptor for the preprotein-SecB complex and as an ATP-driven molecular motor driving the stepwise translocation of polypeptide chains across the membrane. This is Protein translocase subunit SecA from Burkholderia cenocepacia (strain ATCC BAA-245 / DSM 16553 / LMG 16656 / NCTC 13227 / J2315 / CF5610) (Burkholderia cepacia (strain J2315)).